The sequence spans 732 residues: Elongation factor 2 (732 aa).

The 210-residue stretch at 19–228 folds into the tr-type G domain; it reads ELIRNIGIVA…TKITFKDIVE (210 aa). Residues 28–35, 94–98, and 148–151 contribute to the GTP site; these read AHIDHGKT, DTPGH, and NKID. His598 bears the Diphthamide mark.

This sequence belongs to the TRAFAC class translation factor GTPase superfamily. Classic translation factor GTPase family. EF-G/EF-2 subfamily.

Its subcellular location is the cytoplasm. Functionally, catalyzes the GTP-dependent ribosomal translocation step during translation elongation. During this step, the ribosome changes from the pre-translocational (PRE) to the post-translocational (POST) state as the newly formed A-site-bound peptidyl-tRNA and P-site-bound deacylated tRNA move to the P and E sites, respectively. Catalyzes the coordinated movement of the two tRNA molecules, the mRNA and conformational changes in the ribosome. The protein is Elongation factor 2 (fusA) of Thermoplasma acidophilum (strain ATCC 25905 / DSM 1728 / JCM 9062 / NBRC 15155 / AMRC-C165).